The primary structure comprises 123 residues: Large ribosomal subunit protein bL21 (123 aa).

This sequence belongs to the bacterial ribosomal protein bL21 family. In terms of assembly, part of the 50S ribosomal subunit. Contacts protein L20.

In terms of biological role, this protein binds to 23S rRNA in the presence of protein L20. This chain is Large ribosomal subunit protein bL21, found in Rhizobium meliloti (strain 1021) (Ensifer meliloti).